We begin with the raw amino-acid sequence, 418 residues long: ML-236A carboxylate methylbutanoyltransferase mlcH (418 aa).

Arg-78 contacts monacolin J. The Acyl-ester intermediate role is filled by Ser-81. Residues Arg-178, Tyr-193, and Tyr-262 each contribute to the monacolin J site. Residue Gly-370 participates in 2-methylbutanoate binding.

The protein belongs to the class-A beta-lactamase family.

It catalyses the reaction ML-236A carboxylate + (S)-2-methylbutanoyl-[2-methylbutanoate polyketide synthase] = mevinic carboxylate + holo-[2-methylbutanoate polyketide synthase]. It participates in polyketide biosynthesis. Its function is as follows. Compactin diketide synthase; part of the gene cluster that mediates the biosynthesis of compactin, also known as mevastatin or ML-236B, and which acts as a potent competitive inhibitor of HMG-CoA reductase. Compactin biosynthesis is performed in two stages. The first stage is catalyzed by the nonaketide synthase mlcA, which belongs to type I polyketide synthases and catalyzes the iterative nine-step formation of the polyketide. This PKS stage is completed by the action of dehydrogenase mlcG, which catalyzes the NADPH-dependent reduction of the unsaturated tetra-, penta- and heptaketide intermediates that arise during the mlcA-mediated biosynthesis of the nonaketide chain and leads to dihydro-ML-236C carboxylate. Covalently bound dihydro-ML-236C carboxylate is released from mlcA by the mlcF esterase. Conversion of dihydro-ML-236C carboxylate into ML-236A carboxylate is subsequently performed with the participation of molecular oxygen and P450 monoogygenase mlcC. Finally, mlcH performs the conversion of ML-236A carboxylate to ML-236B/compactin carboxylate through the addition of the side-chain diketide moiety produced by the diketide synthase mlcB. This Penicillium citrinum protein is ML-236A carboxylate methylbutanoyltransferase mlcH.